A 976-amino-acid chain; its full sequence is Vacuolar membrane protease (976 aa).

Residues 1 to 15 (MKLKSVFRSVLKYRK) lie on the Cytoplasmic side of the membrane. A helical transmembrane segment spans residues 16–36 (TNLSLLLLITYSIITLLYIFD). At 37–359 (HERYKLNLPK…KFFVISAKTL (323 aa)) the chain is on the vacuolar side. Residues Asn96 and Asn121 are each glycosylated (N-linked (GlcNAc...) asparagine). The Zn(2+) site is built by His156 and Asp168. N-linked (GlcNAc...) asparagine glycosylation is present at Asn189. The active-site Proton acceptor is the Glu200. A Zn(2+)-binding site is contributed by Glu201. N-linked (GlcNAc...) asparagine glycosylation is found at Asn212 and Asn217. Zn(2+) is bound by residues Glu226 and His300. A helical membrane pass occupies residues 360–380 (FYWNCIFLLVSPVVAIGLYLI). Topologically, residues 381-392 (SRDRMTWKSHSW) are cytoplasmic. A helical membrane pass occupies residues 393-412 (LSWTRFPLSLAAGIIVQKLF). Residues 413–428 (SNDIIRSNPLTFSRNY) lie on the Vacuolar side of the membrane. A helical membrane pass occupies residues 429 to 449 (FWPISAFFTQVIFTSYVLINC). The Cytoplasmic portion of the chain corresponds to 450-461 (SNFFFPCADMKS). The chain crosses the membrane as a helical span at residues 462–482 (LSIIELFIILWTILLFTSKLL). At 483-496 (YSSDYRYTGLYPLS) the chain is on the vacuolar side. The helical transmembrane segment at 497–517 (IFFLLSTIAAILRLLALALGM) threads the bilayer. The Cytoplasmic portion of the chain corresponds to 518–627 (RTRKRLGREC…NSLKLEYTDY (110 aa)). The segment at 528 to 610 (RDHHSNYSSH…PLLKGSNSME (83 aa)) is disordered. Polar residues predominate over residues 549–558 (NLEQPQDQFT). Positions 559–570 (SSQDDQASIQDD) are enriched in low complexity. Residues 582–601 (NVDEDHGMDSSSQQHDERVP) are compositionally biased toward basic and acidic residues. Residues 628–648 (AWIIQFLLIVPIPSFILFNSV) traverse the membrane as a helical segment. Over 649–668 (DVIMDALNHTVQEGSKATFD) the chain is Vacuolar. The N-linked (GlcNAc...) asparagine glycan is linked to Asn656. Residues 669–689 (VLRFGMVGSILIALPILPFFY) form a helical membrane-spanning segment. At 690–692 (KVN) the chain is on the cytoplasmic side. Residues 693–713 (YITISLTALLFLISASKTLLV) form a helical membrane-spanning segment. Topologically, residues 714-976 (HPFTNSNPLK…LVIVKDAIIL (263 aa)) are vacuolar. 5 N-linked (GlcNAc...) asparagine glycosylation sites follow: Asn768, Asn796, Asn811, Asn866, and Asn937.

This sequence belongs to the peptidase M28 family. Zn(2+) is required as a cofactor.

It is found in the vacuole membrane. In terms of biological role, may be involved in vacuolar sorting and osmoregulation. The chain is Vacuolar membrane protease from Saccharomyces cerevisiae (strain JAY291) (Baker's yeast).